The chain runs to 395 residues: NAD(P)H-quinone oxidoreductase subunit H, chloroplastic (395 aa).

This sequence belongs to the complex I 49 kDa subunit family. As to quaternary structure, NDH is composed of at least 16 different subunits, 5 of which are encoded in the nucleus.

The protein resides in the plastid. It is found in the chloroplast thylakoid membrane. The enzyme catalyses a plastoquinone + NADH + (n+1) H(+)(in) = a plastoquinol + NAD(+) + n H(+)(out). It carries out the reaction a plastoquinone + NADPH + (n+1) H(+)(in) = a plastoquinol + NADP(+) + n H(+)(out). In terms of biological role, NDH shuttles electrons from NAD(P)H:plastoquinone, via FMN and iron-sulfur (Fe-S) centers, to quinones in the photosynthetic chain and possibly in a chloroplast respiratory chain. The immediate electron acceptor for the enzyme in this species is believed to be plastoquinone. Couples the redox reaction to proton translocation, and thus conserves the redox energy in a proton gradient. The polypeptide is NAD(P)H-quinone oxidoreductase subunit H, chloroplastic (Dioscorea elephantipes (Elephant's foot yam)).